Here is a 157-residue protein sequence, read N- to C-terminus: uncharacterized protein (157 aa).

One can recognise an N-acetyltransferase domain in the interval 9–146 (LLINYKTLDE…GDFYVWHPET (138 aa)).

This is an uncharacterized protein from Bacillus cereus (strain ATCC 10987 / NRS 248).